Reading from the N-terminus, the 215-residue chain is Large ribosomal subunit protein uL4c (215 aa).

The tract at residues 51–87 (QKQGTVSTKTRSEVRGGGKKPWRQKGTGRARAGSSRS) is disordered. A compositionally biased stretch (basic residues) spans 67-78 (GGKKPWRQKGTG).

Belongs to the universal ribosomal protein uL4 family. As to quaternary structure, part of the 50S ribosomal subunit.

The protein localises to the plastid. It is found in the chloroplast. In terms of biological role, probably binds the 23S rRNA. The polypeptide is Large ribosomal subunit protein uL4c (rpl4) (Thalassiosira pseudonana (Marine diatom)).